A 270-amino-acid chain; its full sequence is Putative envelope-preserving system protein Rv2743c (270 aa).

The next 2 membrane-spanning stretches (helical) occupy residues 50–72 (ALRW…ALLA) and 77–99 (FTSL…TLLL).

Interacts with PspA and Rv2742c.

The protein localises to the membrane. Its function is as follows. Involved in preservation of envelope integrity and tolerance to surface stress. Reverses the inhibitory effect of PspA on ClgR activity. Facilitates intracellular growth of M.tuberculosis. The chain is Putative envelope-preserving system protein Rv2743c from Mycobacterium tuberculosis (strain ATCC 25618 / H37Rv).